Here is a 221-residue protein sequence, read N- to C-terminus: Vacuolar protein sorting-associated protein 20 (221 aa).

Gly2 carries N-myristoyl glycine lipidation. The stretch at 72-178 (QEHLLQQASD…LNPEKMNNAK (107 aa)) forms a coiled coil. A disordered region spans residues 170 to 221 (NPEKMNNAKVANMPSTEGLPSLPQGEQTEQKEREEFATEERSDTKEPLALLS). Over residues 197–215 (TEQKEREEFATEERSDTKE) the composition is skewed to basic and acidic residues.

It belongs to the SNF7 family. In terms of assembly, core component of the ESCRT-III complex (endosomal sorting required for transport complex III). ESCRT-III appears to be sequentially assembled as a flat lattice on the endosome membrane and forms a transient 450 kDa complex that contains DID4, oligomerized SNF7, VPS20 and VPS24. SNF7 oligomerization into a membrane-associated filament is nucleated by association of SNF7 with VPS20; the process is terminated through association of VPS24, possibly by capping the SNF7 filament. VPS24 subsequently associates with DID4/VPS2. Interacts with the VPS4. Interacts with VPS25; the interaction mediates the association with the ESCRT-II complex.

The protein resides in the endosome membrane. It is found in the vacuole membrane. Functionally, class E VPS protein implicated in concentration and sorting of cargo proteins of the multivesicular body (MVB) for incorporation into intralumenal vesicles. The lumenal sequestrated membrane proteins will be targeted into the vacuole after fusion of the endosome with the vacuole. Acts a component of the ESCRT-III complex, which appears to be critical for late steps in MVB sorting, such as membrane invagination and final cargo sorting and recruitment of late-acting components of the sorting machinery. The MVB pathway requires the sequential function of ESCRT-O, -I,-II and -III complex assemblies. Required for the oligomerization of SNF7 into a membrane-associated filament. The VPS20-SNF7 subcomplex is responsible for the membrane association of the ESCRT-III complex. Also required for the RIM101 repressor proteolytic activation. The protein is Vacuolar protein sorting-associated protein 20 (VPS20) of Saccharomyces cerevisiae (strain ATCC 204508 / S288c) (Baker's yeast).